Here is a 296-residue protein sequence, read N- to C-terminus: tRNA pseudouridine synthase B (296 aa).

Asp-38 serves as the catalytic Nucleophile.

The protein belongs to the pseudouridine synthase TruB family. Type 1 subfamily.

The enzyme catalyses uridine(55) in tRNA = pseudouridine(55) in tRNA. Its function is as follows. Responsible for synthesis of pseudouridine from uracil-55 in the psi GC loop of transfer RNAs. The chain is tRNA pseudouridine synthase B from Ehrlichia ruminantium (strain Gardel).